The sequence spans 140 residues: Large ribosomal subunit protein uL11 (140 aa).

This sequence belongs to the universal ribosomal protein uL11 family. In terms of assembly, part of the ribosomal stalk of the 50S ribosomal subunit. Interacts with L10 and the large rRNA to form the base of the stalk. L10 forms an elongated spine to which L12 dimers bind in a sequential fashion forming a multimeric L10(L12)X complex. In terms of processing, one or more lysine residues are methylated.

Its function is as follows. Forms part of the ribosomal stalk which helps the ribosome interact with GTP-bound translation factors. The protein is Large ribosomal subunit protein uL11 of Dehalococcoides mccartyi (strain ATCC BAA-2100 / JCM 16839 / KCTC 5957 / BAV1).